The chain runs to 175 residues: MQAASLAFHPPALRTSPSYLSSKLPHHLNYSLFKHAPSTSTLSLTQVLSRNTICKPPAVGKYVREDYLVKKLSAKEIQELIKGERNVPLIIDFYATWCGPCILMAQELEMLAVEYENNALIVKVDTDDEYEFARDMQVRGLPTLYFISPDSSKDAIRTEGLIPIQMMRDIIDNDL.

The transit peptide at 1–64 directs the protein to the chloroplast; the sequence is MQAASLAFHP…KPPAVGKYVR (64 aa). In terms of domain architecture, Thioredoxin spans 74–175; sequence AKEIQELIKG…MMRDIIDNDL (102 aa). Residues Cys-98 and Cys-101 each act as nucleophile in the active site. An intrachain disulfide couples Cys-98 to Cys-101.

The protein belongs to the thioredoxin family. Plant CITRX-type subfamily. In terms of assembly, interacts with Cf-9 resistance protein.

It localises to the plastid. The protein localises to the chloroplast. Its function is as follows. Probable thiol-disulfide oxidoreductase that may play a role in proper chloroplast development. The sequence is that of Thioredoxin-like protein CITRX, chloroplastic from Solanum lycopersicum (Tomato).